Here is a 1273-residue protein sequence, read N- to C-terminus: DNA-directed RNA polymerase subunit beta (1273 aa).

Positions Ala-1252–Ser-1273 are disordered.

It belongs to the RNA polymerase beta chain family. In terms of assembly, the RNAP catalytic core consists of 2 alpha, 1 beta, 1 beta' and 1 omega subunit. When a sigma factor is associated with the core the holoenzyme is formed, which can initiate transcription.

It carries out the reaction RNA(n) + a ribonucleoside 5'-triphosphate = RNA(n+1) + diphosphate. Its function is as follows. DNA-dependent RNA polymerase catalyzes the transcription of DNA into RNA using the four ribonucleoside triphosphates as substrates. The protein is DNA-directed RNA polymerase subunit beta of Dehalococcoides mccartyi (strain ATCC BAA-2100 / JCM 16839 / KCTC 5957 / BAV1).